We begin with the raw amino-acid sequence, 931 residues long: DNA mismatch repair protein MutS (931 aa).

The span at 1 to 10 shows a compositional bias: low complexity; that stretch reads MMDDTAMPAR. Residues 1-34 form a disordered region; it reads MMDDTAMPARAEADAAEDELAAPAGIDRTAKADK. 674–681 is an ATP binding site; that stretch reads GPNMAGKS.

The protein belongs to the DNA mismatch repair MutS family.

Functionally, this protein is involved in the repair of mismatches in DNA. It is possible that it carries out the mismatch recognition step. This protein has a weak ATPase activity. This chain is DNA mismatch repair protein MutS, found in Azorhizobium caulinodans (strain ATCC 43989 / DSM 5975 / JCM 20966 / LMG 6465 / NBRC 14845 / NCIMB 13405 / ORS 571).